Reading from the N-terminus, the 146-residue chain is Holo-[acyl-carrier-protein] synthase (146 aa).

2 residues coordinate Mg(2+): D9 and E63.

The protein belongs to the P-Pant transferase superfamily. AcpS family. It depends on Mg(2+) as a cofactor.

The protein localises to the cytoplasm. It catalyses the reaction apo-[ACP] + CoA = holo-[ACP] + adenosine 3',5'-bisphosphate + H(+). Its function is as follows. Transfers the 4'-phosphopantetheine moiety from coenzyme A to a Ser of acyl-carrier-protein. The chain is Holo-[acyl-carrier-protein] synthase from Burkholderia ambifaria (strain MC40-6).